The sequence spans 955 residues: 2-oxoglutarate dehydrogenase E1 component (955 aa).

Belongs to the alpha-ketoglutarate dehydrogenase family. Homodimer. Part of the 2-oxoglutarate dehydrogenase (OGDH) complex composed of E1 (2-oxoglutarate dehydrogenase), E2 (dihydrolipoamide succinyltransferase) and E3 (dihydrolipoamide dehydrogenase); the complex contains multiple copies of the three enzymatic components (E1, E2 and E3). The cofactor is thiamine diphosphate.

The enzyme catalyses N(6)-[(R)-lipoyl]-L-lysyl-[protein] + 2-oxoglutarate + H(+) = N(6)-[(R)-S(8)-succinyldihydrolipoyl]-L-lysyl-[protein] + CO2. E1 component of the 2-oxoglutarate dehydrogenase (OGDH) complex which catalyzes the decarboxylation of 2-oxoglutarate, the first step in the conversion of 2-oxoglutarate to succinyl-CoA and CO(2). In Bacillus anthracis (strain A0248), this protein is 2-oxoglutarate dehydrogenase E1 component.